Reading from the N-terminus, the 90-residue chain is Cell division topological specificity factor (90 aa).

Residues 1–21 (MAGFWSKLFSSEEKPSSAQTA) are disordered. Over residues 10 to 21 (SSEEKPSSAQTA) the composition is skewed to basic and acidic residues.

It belongs to the MinE family.

In terms of biological role, prevents the cell division inhibition by proteins MinC and MinD at internal division sites while permitting inhibition at polar sites. This ensures cell division at the proper site by restricting the formation of a division septum at the midpoint of the long axis of the cell. In Acinetobacter baumannii (strain AB307-0294), this protein is Cell division topological specificity factor.